The sequence spans 329 residues: Secretory carrier-associated membrane protein 2 (329 aa).

A disordered region spans residues 1–74; that stretch reads MSAFDTNPFA…PSVEPAQPTP (74 aa). Residues 1–153 lie on the Cytoplasmic side of the membrane; the sequence is MSAFDTNPFA…DYQRICKMLY (153 aa). Composition is skewed to polar residues over residues 19–31 and 40–51; these read QDPS…NAPQ and FSETNAATTVPA. Residues 154-174 traverse the membrane as a helical segment; the sequence is YLWMLHSVTLFLNLLACLAWF. The Lumenal segment spans residues 175 to 181; that stretch reads TSDAANG. Residues 182-202 traverse the membrane as a helical segment; sequence TAFGLSILWFLIFTPCAFLCW. Over 203 to 218 the chain is Cytoplasmic; it reads YRPIYKAFRSDNSFSF. The tract at residues 203 to 218 is interaction with SLC9A7; that stretch reads YRPIYKAFRSDNSFSF. A helical membrane pass occupies residues 219 to 239; the sequence is FVFFFVFFCQIGIYFIQLIGL. Residues 240–262 are Lumenal-facing; that stretch reads PNLGTSGWLAALSTMKNGPLAVT. A helical transmembrane segment spans residues 263–283; sequence IIMMVVAGFFTLCAGLSLFLL. Residues 284–329 are Cytoplasmic-facing; the sequence is QRVHAFYRRTGASFQQAQEEFSQGIFSSRTFRGAASSAARGAFQGN. A phosphoserine mark is found at S319 and S320.

It belongs to the SCAMP family. Interacts with SLC6A4 and SLC9A7. Interacts with SLC9A5; this interaction regulates SLC9A5 cell-surface targeting and SLC9A5 activity.

It is found in the golgi apparatus. The protein resides in the trans-Golgi network membrane. The protein localises to the recycling endosome membrane. Its function is as follows. Functions in post-Golgi recycling pathways. Acts as a recycling carrier to the cell surface. This chain is Secretory carrier-associated membrane protein 2 (Scamp2), found in Mus musculus (Mouse).